The chain runs to 255 residues: MVLLLVILIPVLVSSAGTSAHYEMLGTCRMVCDPYGGTKAPSTAATPDRGLMQSLPTFIQGPKGEAGRPGKAGPRGPPGEPGPPGPVGPPGEKGEPGRQGLPGPPGAPGLNAAGAISAATYSTVPKIAFYAGLKRQHEGYEVLKFDDVVTNLGNHYDPTTGKFTCSIPGIYFFTYHVLMRGGDGTSMWADLCKNNQVRASAIAQDADQNYDYASNSVVLHLEPGDEVYIKLDGGKAHGGNNNKYSTFSGFIIYAD.

The N-terminal stretch at 1-20 (MVLLLVILIPVLVSSAGTSA) is a signal peptide. A disordered region spans residues 39–109 (KAPSTAATPD…GLPGPPGAPG (71 aa)). A Collagen-like domain is found at 61–111 (GPKGEAGRPGKAGPRGPPGEPGPPGPVGPPGEKGEPGRQGLPGPPGAPGLN). Positions 75–89 (RGPPGEPGPPGPVGP) are enriched in pro residues. The C1q domain maps to 122–255 (STVPKIAFYA…TFSGFIIYAD (134 aa)).

In terms of assembly, forms homooligomers. Interacts with ADGRB3. Forms heterooligomers with C1QL2 and C1QL4, when proteins are coexpressed; this interaction does not occur after secretion. As to expression, highly expressed in brain and white adipose tissue. In gonadal fat pad, expressed at lower levels in adipocytes than in the stromal vascular fraction (VSP), which contains preadipocytes, fibroblasts, endothelial cells and occasional immune cells. Expression exhibits sexually dimorphism, with higher levels in females than in males (at protein level). Tends to be up-regulated in adipose tissue from obese males, but not females. Expressed in glial cells.

It localises to the secreted. In terms of biological role, may regulate the number of excitatory synapses that are formed on hippocampus neurons. Has no effect on inhibitory synapses. Plays a role in glucose homeostasis. Via AMPK signaling pathway, stimulates glucose uptake in adipocytes, myotubes and hepatocytes and enhances insulin-stimulated glucose uptake. In a hepatoma cell line, reduces the expression of gluconeogenic enzymes G6PC1 and PCK1 and hence decreases de novo glucose production. This is Complement C1q-like protein 3 (C1ql3) from Mus musculus (Mouse).